Consider the following 467-residue polypeptide: MPILPSPNPPVEPYKIRMVEPIRLLPREERLRRLREAGWNVFRLRSIDIFIDLLTDSGTGSMSIYQWAALMTGDEAYAGARSWFRFRDAVRDVLGLDLVLPVHQGRAAERILYGELLRRRNARIVPANTHFDTGRAVILNQGGVPLDLPSPQASRREAYPFKGDIDVARLERLLKERSRDVAFILLVITNNTAGGQPVSMDNVKTVRELADAYGLPLVMDICRFAENAYLVKERDPRYRGWSVRDIAREMISYGDHFVMSAKKDGLANIGGFIATRDPSLYEDLAARVVLEEGYVTYGGLAGRDLEAIAQGLREVVEEDYLRHRVEQVRYLGELLSSQGVPIVEPVGGHAVYVDVLEALPEMPRSHYPADALAAALYLESGVRAVGLGALAFAREENGEIVYPEFELLRLAVPRRTYTNSHMEYVAASLARLLREGRRKVKGLRVVKEPRIKGIRHFLAELEPIEPV.

Residue Lys-263 is modified to N6-(pyridoxal phosphate)lysine.

Belongs to the beta-eliminating lyase family. Pyridoxal 5'-phosphate serves as cofactor.

The enzyme catalyses L-tryptophan + H2O = indole + pyruvate + NH4(+). It participates in amino-acid degradation; L-tryptophan degradation via pyruvate pathway; indole and pyruvate from L-tryptophan: step 1/1. In Aeropyrum pernix (strain ATCC 700893 / DSM 11879 / JCM 9820 / NBRC 100138 / K1), this protein is Probable tryptophanase (tnaA).